The sequence spans 435 residues: Zinc finger and BTB domain-containing protein 25 (435 aa).

In terms of domain architecture, BTB spans 1–107 (MDTASHSLVL…GIRFLHADYL (107 aa)). Residues Lys-142, Lys-148, Lys-198, and Lys-204 each participate in a glycyl lysine isopeptide (Lys-Gly) (interchain with G-Cter in SUMO2) cross-link. The C2H2-type 1 zinc-finger motif lies at 238–260 (HLCHYCGERFDSRSNLRQHLHTH). Residues Lys-303 and Lys-330 each participate in a glycyl lysine isopeptide (Lys-Gly) (interchain with G-Cter in SUMO2) cross-link. The C2H2-type 2 zinc finger occupies 349–371 (MSCTICGHKFPRKSQLLEHMYTH). Lys-405 is covalently cross-linked (Glycyl lysine isopeptide (Lys-Gly) (interchain with G-Cter in SUMO2)).

As to expression, expressed mainly in hematopoietic cells and testis.

The protein localises to the nucleus. Its function is as follows. May be involved in transcriptional regulation. This chain is Zinc finger and BTB domain-containing protein 25 (ZBTB25), found in Homo sapiens (Human).